The chain runs to 98 residues: NADH-ubiquinone oxidoreductase chain 4L (98 aa).

The next 3 helical transmembrane spans lie at T2–F22, L26–T46, and I59–V79.

This sequence belongs to the complex I subunit 4L family. Core subunit of respiratory chain NADH dehydrogenase (Complex I) which is composed of 45 different subunits.

The protein resides in the mitochondrion inner membrane. It carries out the reaction a ubiquinone + NADH + 5 H(+)(in) = a ubiquinol + NAD(+) + 4 H(+)(out). Functionally, core subunit of the mitochondrial membrane respiratory chain NADH dehydrogenase (Complex I) which catalyzes electron transfer from NADH through the respiratory chain, using ubiquinone as an electron acceptor. Part of the enzyme membrane arm which is embedded in the lipid bilayer and involved in proton translocation. The chain is NADH-ubiquinone oxidoreductase chain 4L from Rattus norvegicus (Rat).